We begin with the raw amino-acid sequence, 287 residues long: S-methyl-5'-thioadenosine phosphorylase (287 aa).

Residues Thr-13 and 55 to 56 contribute to the phosphate site; that span reads RH. Met-186 is a binding site for substrate. Position 187 (Thr-187) interacts with phosphate. 210 to 212 contacts substrate; that stretch reads DYD.

It belongs to the PNP/MTAP phosphorylase family. MTAP subfamily. In terms of assembly, homohexamer. Dimer of a homotrimer.

It catalyses the reaction S-methyl-5'-thioadenosine + phosphate = 5-(methylsulfanyl)-alpha-D-ribose 1-phosphate + adenine. It participates in amino-acid biosynthesis; L-methionine biosynthesis via salvage pathway; S-methyl-5-thio-alpha-D-ribose 1-phosphate from S-methyl-5'-thioadenosine (phosphorylase route): step 1/1. Functionally, catalyzes the reversible phosphorylation of S-methyl-5'-thioadenosine (MTA) to adenine and 5-methylthioribose-1-phosphate. Involved in the breakdown of MTA, a major by-product of polyamine biosynthesis. Responsible for the first step in the methionine salvage pathway after MTA has been generated from S-adenosylmethionine. Has broad substrate specificity with 6-aminopurine nucleosides as preferred substrates. This is S-methyl-5'-thioadenosine phosphorylase from Leptospira interrogans serogroup Icterohaemorrhagiae serovar Lai (strain 56601).